Consider the following 206-residue polypeptide: Cytochrome b6-f complex iron-sulfur subunit, chloroplastic (206 aa).

The transit peptide at 1–29 (MAMITSRRAAAPCKAQATRRSRVMSVVRA) directs the protein to the chloroplast. The chain crosses the membrane as a helical span at residues 48 to 68 (ILLGGASLPVGSLALGYGAFF). The Rieske domain occupies 92–188 (ANAWLATHQK…CDVQEDGLVT (97 aa)). The [2Fe-2S] cluster site is built by C134, H136, C152, and H155. The cysteines at positions 139 and 154 are disulfide-linked.

Belongs to the Rieske iron-sulfur protein family. The 4 large subunits of the cytochrome b6-f complex are cytochrome b6, subunit IV (17 kDa polypeptide, petD), cytochrome f and the Rieske protein, while the 4 small subunits are petG, petL, petM and petN. The complex functions as a dimer. It depends on [2Fe-2S] cluster as a cofactor.

It localises to the plastid. Its subcellular location is the chloroplast thylakoid membrane. The enzyme catalyses 2 oxidized [plastocyanin] + a plastoquinol + 2 H(+)(in) = 2 reduced [plastocyanin] + a plastoquinone + 4 H(+)(out). In terms of biological role, component of the cytochrome b6-f complex, which mediates electron transfer between photosystem II (PSII) and photosystem I (PSI), cyclic electron flow around PSI, and state transitions. The protein is Cytochrome b6-f complex iron-sulfur subunit, chloroplastic (petC) of Volvox carteri (Green alga).